We begin with the raw amino-acid sequence, 456 residues long: Phosphomethylpyrimidine synthase (456 aa).

Residues asparagine 80, methionine 109, tyrosine 139, histidine 175, 195–197 (SRG), 236–239 (DSLR), and glutamate 275 contribute to the substrate site. Histidine 279 contacts Zn(2+). Substrate is bound at residue tyrosine 302. Histidine 343 contributes to the Zn(2+) binding site. Positions 423, 426, and 431 each coordinate [4Fe-4S] cluster.

It belongs to the ThiC family. The cofactor is [4Fe-4S] cluster.

The enzyme catalyses 5-amino-1-(5-phospho-beta-D-ribosyl)imidazole + S-adenosyl-L-methionine = 4-amino-2-methyl-5-(phosphooxymethyl)pyrimidine + CO + 5'-deoxyadenosine + formate + L-methionine + 3 H(+). The protein operates within cofactor biosynthesis; thiamine diphosphate biosynthesis. Functionally, catalyzes the synthesis of the hydroxymethylpyrimidine phosphate (HMP-P) moiety of thiamine from aminoimidazole ribotide (AIR) in a radical S-adenosyl-L-methionine (SAM)-dependent reaction. This is Phosphomethylpyrimidine synthase from Prochlorococcus marinus (strain MIT 9515).